The chain runs to 319 residues: Formimidoylglutamase (319 aa).

Positions 127, 150, 152, 154, 242, and 244 each coordinate Mn(2+).

This sequence belongs to the arginase family. The cofactor is Mn(2+).

It catalyses the reaction N-formimidoyl-L-glutamate + H2O = formamide + L-glutamate. The protein operates within amino-acid degradation; L-histidine degradation into L-glutamate; L-glutamate from N-formimidoyl-L-glutamate (hydrolase route): step 1/1. In terms of biological role, catalyzes the conversion of N-formimidoyl-L-glutamate to L-glutamate and formamide. The sequence is that of Formimidoylglutamase from Bacillus subtilis (strain 168).